The primary structure comprises 528 residues: Golgi resident protein GCP60 (528 aa).

The interval 1–71 (MAAVLNAERL…EAAAGGAAEE (71 aa)) is disordered. An N-acetylalanine; in Golgi resident protein GCP60, N-terminally processed modification is found at alanine 2. A Phosphoserine modification is found at serine 13. Threonine 18 is subject to Phosphothreonine. Phosphoserine occurs at positions 20, 43, and 47. Pro residues predominate over residues 34–45 (LLPPPLPPPSPP). A compositionally biased stretch (low complexity) spans 54-69 (SGEQPEPGEAAAGGAA). The ACB domain occupies 83–174 (LEELYGLALR…LNRCCHLFST (92 aa)). A coiled-coil region spans residues 174–257 (TYVASHKIEK…AALNSQTAVQ (84 aa)). Residues 182 to 230 (EKEEQEKKRKEEEERRRREEEERERLQKEEEKRRREEEERLRREEEERR) form a disordered region. Positions 182-240 (EKEEQEKKRKEEEERRRREEEERERLQKEEEKRRREEEERLRREEEERRRIEEERLRLE) are charged amino-acid region (CAR). The q domain; Interaction with PI4KB, TBC1D22A and TBC1D22B stretch occupies residues 241 to 308 (QQKQQIMAAL…QQQAALQKQQ (68 aa)). Residues 335–362 (NGQAKTHTDSSEKELEPEAAEEALENGP) form a disordered region. Residues 340-350 (THTDSSEKELE) show a composition bias toward basic and acidic residues. The GOLD domain maps to 384-526 (KEKIQQDADS…SKSVYYRVYY (143 aa)). Residues 514 to 516 (LWR) are membrane-binding.

Homodimer. Interacts with the C-terminal cytoplasmic domain of giantin/GOLGB1. Interacts with PBR and PKA regulatory subunit RI-alpha. Does not interact with PKA regulatory subunit RI-beta nor PKA regulatory subunit RII-alpha. Interacts (via Q domain) with PI4KB (via N-terminus). Interacts (via Q domain) with TBC1D22A and TBC1D22B; interactions with PI4KB and with TBC1D22A and TBC1D22B are mutually exclusive. Interacts with C10ORF76 and RAB11B. As to quaternary structure, (Microbial infection) Interacts (via GOLD domain) with 3A proteins from various picornaviruses, including poliovirus, enterovirus A71, enterovirus D68, hepatitis A virus, human parechovirus 1, poliovirus, Human rhinovirus-14 (Hrv-14), coysackievirus B2, coysackievirus B3, coysackievirus B5, Aichi virus and human klassevirus. Interacts (via GOLD domain) with Aichi virus protein 3A; this interaction allows the formation of a 3A/ACBD3/PI4KB complex in order to synthesize PI4P at the viral RNA replication sites. Interacts with Aichi virus protein 2B. Interacts with Aichi virus protein 2C. In terms of tissue distribution, ubiquitous, with highest expression in testis and ovary.

It localises to the golgi apparatus membrane. It is found in the mitochondrion. Its function is as follows. Involved in the maintenance of Golgi structure by interacting with giantin, affecting protein transport between the endoplasmic reticulum and Golgi. Involved in hormone-induced steroid biosynthesis in testicular Leydig cells. Recruits PI4KB to the Golgi apparatus membrane; enhances the enzyme activity of PI4KB activity via its membrane recruitment thereby increasing the local concentration of the substrate in the vicinity of the kinase. (Microbial infection) Plays an essential role in Aichi virus RNA replication by recruiting PI4KB at the viral replication sites. The sequence is that of Golgi resident protein GCP60 (ACBD3) from Homo sapiens (Human).